A 611-amino-acid polypeptide reads, in one-letter code: CRS2-associated factor 2, chloroplastic (611 aa).

Residues 1–58 (MPPPPPQRPASSHVGRANLFSASPPPLSNRRYPHHRSLPLPPVSPRRRDPKKHSQQPS) constitute a chloroplast transit peptide. The tract at residues 1 to 72 (MPPPPPQRPA…TDSGPTRTVT (72 aa)) is disordered. Polar residues predominate over residues 55–72 (QQPSQEEPTDSGPTRTVT). 2 CRM domains span residues 232–328 (EPLT…TRPR) and 350–446 (DGFT…YSKP). A CRS2 binding region spans residues 486-509 (KMFKLWKSAVDSSLALLLDDAEAN). Residues 554 to 578 (MNDEPETSVAGNEEGQLEQSPDLRD) form a disordered region.

Interacts with CRS2 and RNA. Part of large ribonucleo-protein complexes that include group IIB introns, CRS2 and CAF2.

The protein localises to the plastid. Its subcellular location is the chloroplast stroma. Functionally, required for the splicing of group IIB introns in chloroplasts. Forms splicing particles with CRS2. Interacts with RNA and confers intron specificity of the splicing particles. This Zea mays (Maize) protein is CRS2-associated factor 2, chloroplastic (CAF2).